We begin with the raw amino-acid sequence, 55 residues long: Spermatid nuclear transition protein 1 (55 aa).

Residues 1–42 (MSTSRKLKSHGMRRSKSRSPHKGVKRGGSKRKYRKGNLKSRK) show a composition bias toward basic residues. The interval 1–55 (MSTSRKLKSHGMRRSKSRSPHKGVKRGGSKRKYRKGNLKSRKRGDDANRNYRSHL) is disordered. Phosphoserine occurs at positions 9 and 40.

This sequence belongs to the nuclear transition protein 1 family. Expressed by spermatids (at protein level).

It is found in the nucleus. The protein resides in the chromosome. In terms of biological role, plays a key role in the replacement of histones to protamine in the elongating spermatids of mammals. In condensing spermatids, loaded onto the nucleosomes, where it promotes the recruitment and processing of protamines, which are responsible for histone eviction. In Homo sapiens (Human), this protein is Spermatid nuclear transition protein 1 (TNP1).